Here is a 733-residue protein sequence, read N- to C-terminus: Catalase-peroxidase 2 (733 aa).

Residues 1–35 are disordered; the sequence is MAEAETHPPIGESQTEPAESGCPMRIKPPVEGGSN. The segment at residues 106 to 234 is a cross-link (tryptophyl-tyrosyl-methioninium (Trp-Tyr) (with M-260)); that stretch reads WHAAGTYRVE…PXXPHMGLIY (129 aa). The Proton acceptor role is filled by His107. The tryptophyl-tyrosyl-methioninium (Tyr-Met) (with W-106) cross-link spans 234 to 260; the sequence is YVNPEGPEGNPDYLAAAIDIRETFGRM. A heme-binding site is contributed by His275.

The protein belongs to the peroxidase family. Peroxidase/catalase subfamily. As to quaternary structure, homodimer or homotetramer. Heme b is required as a cofactor. In terms of processing, formation of the three residue Trp-Tyr-Met cross-link is important for the catalase, but not the peroxidase activity of the enzyme.

The catalysed reaction is H2O2 + AH2 = A + 2 H2O. It carries out the reaction 2 H2O2 = O2 + 2 H2O. Bifunctional enzyme with both catalase and broad-spectrum peroxidase activity. May play a role in the intracellular survival of mycobacteria. This Mycolicibacterium fortuitum (Mycobacterium fortuitum) protein is Catalase-peroxidase 2.